The chain runs to 96 residues: Probable quinol oxidase subunit 4 (96 aa).

The next 3 membrane-spanning stretches (helical) occupy residues 8–28 (TVGF…TLYT), 36–56 (VTII…MFMH), and 68–88 (FKVI…YWVM).

It belongs to the cytochrome c oxidase bacterial subunit 4 family.

It localises to the cell membrane. It catalyses the reaction 2 a quinol + O2 = 2 a quinone + 2 H2O. Its function is as follows. Catalyzes quinol oxidation with the concomitant reduction of oxygen to water. The polypeptide is Probable quinol oxidase subunit 4 (qoxD) (Staphylococcus epidermidis (strain ATCC 35984 / DSM 28319 / BCRC 17069 / CCUG 31568 / BM 3577 / RP62A)).